A 511-amino-acid polypeptide reads, in one-letter code: Exodeoxyribonuclease 7 large subunit (511 aa).

The protein belongs to the XseA family. In terms of assembly, heterooligomer composed of large and small subunits.

The protein resides in the cytoplasm. The enzyme catalyses Exonucleolytic cleavage in either 5'- to 3'- or 3'- to 5'-direction to yield nucleoside 5'-phosphates.. In terms of biological role, bidirectionally degrades single-stranded DNA into large acid-insoluble oligonucleotides, which are then degraded further into small acid-soluble oligonucleotides. This Brucella canis (strain ATCC 23365 / NCTC 10854 / RM-666) protein is Exodeoxyribonuclease 7 large subunit.